Consider the following 545-residue polypeptide: Chaperonin GroEL 1 (545 aa).

Residues 30-33 (TLGP), K51, 87-91 (DGTTT), G415, 479-481 (NAA), and D495 contribute to the ATP site.

The protein belongs to the chaperonin (HSP60) family. As to quaternary structure, forms a cylinder of 14 subunits composed of two heptameric rings stacked back-to-back. Interacts with the co-chaperonin GroES.

It localises to the cytoplasm. The enzyme catalyses ATP + H2O + a folded polypeptide = ADP + phosphate + an unfolded polypeptide.. Functionally, together with its co-chaperonin GroES, plays an essential role in assisting protein folding. The GroEL-GroES system forms a nano-cage that allows encapsulation of the non-native substrate proteins and provides a physical environment optimized to promote and accelerate protein folding. The polypeptide is Chaperonin GroEL 1 (Methylococcus capsulatus (strain ATCC 33009 / NCIMB 11132 / Bath)).